The primary structure comprises 114 residues: UPF0145 protein PF1756 (114 aa).

Belongs to the UPF0145 family.

The protein is UPF0145 protein PF1756 of Pyrococcus furiosus (strain ATCC 43587 / DSM 3638 / JCM 8422 / Vc1).